Here is a 46-residue protein sequence, read N- to C-terminus: Protein PsbN (46 aa).

A helical transmembrane segment spans residues 7 to 27 (ALSVAIGVLAVLFGLTGFGVY).

This sequence belongs to the PsbN family.

The protein resides in the cellular thylakoid membrane. Its function is as follows. May play a role in photosystem I and II biogenesis. This is Protein PsbN from Synechococcus sp. (strain CC9605).